Reading from the N-terminus, the 38-residue chain is HSDATFTAEYSKLLAKLALQKYLESILGSSTSPRPPSS.

An O-linked (HexNAc...) serine; in Exendin-1 and Exendin-1b glycan is attached at serine 32.

It belongs to the glucagon family. O-linked glycan consists of Hex-HexNAc saccharide. In terms of processing, glycosylation may be of interest for the biological stability of exendin-1 and exendin-1b. As to expression, expressed by the venom gland.

Its subcellular location is the secreted. Functionally, O-linked and free exendin-1 and exendin-1b have vasoactive intestinal peptide(VIP)/secretin-like biological activities. They interact with rat and human VIP receptors 1 (VIPR1) and 2 (VIPR2), with the highest affinity for the human VIPR2. They induce hypotension that is mediated by relaxation of cardiac smooth muscle. The polypeptide is Exendin-1 (Heloderma horridum horridum (Mexican beaded lizard)).